The primary structure comprises 819 residues: Regulator of G-protein signaling rgs-7 (819 aa).

Residues 1–11 show a composition bias toward acidic residues; sequence MSDEDADEYDD. 3 disordered regions span residues 1 to 51, 112 to 135, and 149 to 259; these read MSDE…EMLW, GDDS…GYGS, and SSTY…HNNE. The span at 32–44 shows a compositional bias: polar residues; the sequence is YQDTTESTGPSEA. Positions 112–124 are enriched in basic and acidic residues; it reads GDDSSFRSRDRFV. Residues 149–166 show a composition bias toward low complexity; the sequence is SSTYSSSSEAHRLSSLRA. The segment covering 173-185 has biased composition (polar residues); the sequence is QLTSTTTSFQPLS. Positions 213 to 223 are enriched in basic residues; it reads RMYRKNPKYRR. Basic and acidic residues predominate over residues 234–259; the sequence is SRLEESTSQESERAVTPESWMEHNNE. The C2 domain maps to 290 to 429; that stretch reads KHKDIRGIIF…KASQVVGDPF (140 aa). 2 disordered regions span residues 515–594 and 617–640; these read YRST…DDNG and FTFS…EEDK. Composition is skewed to polar residues over residues 517-533, 559-568, and 617-632; these read STGS…NLLD, PSITTTTSEN, and FTFS…NLRQ. Residues 682-800 enclose the RGS domain; the sequence is SFESLLNNKF…LRDRLFLDLL (119 aa).

In terms of assembly, interacts with egl-30.

Its function is as follows. Inhibits signal transduction by increasing the GTPase activity of G protein alpha subunit egl-30 (G-alpha(q)), thereby driving it into its inactive GDP-bound form. May organize egl-30 into a stable multiprotein signaling complex, and thereby persistently inhibit egl-30 when triggered by calcium or phospholipids. The chain is Regulator of G-protein signaling rgs-7 (rgs-7) from Caenorhabditis elegans.